Here is a 147-residue protein sequence, read N- to C-terminus: UPF0178 protein Tgr7_2584 (147 aa).

This sequence belongs to the UPF0178 family.

The protein is UPF0178 protein Tgr7_2584 of Thioalkalivibrio sulfidiphilus (strain HL-EbGR7).